Consider the following 121-residue polypeptide: Small ribosomal subunit protein uS12c (121 aa).

It belongs to the universal ribosomal protein uS12 family. In terms of assembly, part of the 30S ribosomal subunit.

It is found in the plastid. It localises to the chloroplast. Its function is as follows. With S4 and S5 plays an important role in translational accuracy. Located at the interface of the 30S and 50S subunits. The polypeptide is Small ribosomal subunit protein uS12c (rps12) (Bigelowiella natans (Pedinomonas minutissima)).